We begin with the raw amino-acid sequence, 69 residues long: MIFKVFYQENPDEVPVREKTKTLYIEAESEREVRQKLQGHTMNIEYIQPLEGAHLEYEKKNPDFKVLEI.

The protein belongs to the RNA polymerase subunit epsilon family. RNAP is composed of a core of 2 alpha, a beta and a beta' subunit. The core is associated with a delta subunit, and at least one of epsilon or omega. When a sigma factor is associated with the core the holoenzyme is formed, which can initiate transcription.

It carries out the reaction RNA(n) + a ribonucleoside 5'-triphosphate = RNA(n+1) + diphosphate. A non-essential component of RNA polymerase (RNAP). The chain is DNA-directed RNA polymerase subunit epsilon from Geobacillus sp. (strain WCH70).